The primary structure comprises 1060 residues: Carbamoyl phosphate synthase large chain (1060 aa).

Positions 1 to 401 are carboxyphosphate synthetic domain; the sequence is MPKRTDIKKI…SLLKAVRSLE (401 aa). ATP contacts are provided by Arg-129, Arg-169, Gly-175, Gly-176, Lys-208, Ile-210, Glu-215, Gly-241, Ile-242, His-243, Gln-284, and Glu-298. Positions 133 to 327 constitute an ATP-grasp 1 domain; the sequence is KQLMEELEQP…IAKLAAKIAV (195 aa). Positions 284, 298, and 300 each coordinate Mg(2+). Gln-284, Glu-298, and Asn-300 together coordinate Mn(2+). An oligomerization domain region spans residues 402-546; the sequence is IGAYHNELAE…YSTYEVENES (145 aa). A carbamoyl phosphate synthetic domain region spans residues 547 to 929; that stretch reads NVSKKPSVLV…ALYKAFEASG (383 aa). Residues 671–861 form the ATP-grasp 2 domain; sequence EQALQELAIP…MAQVATKAIL (191 aa). Residues Arg-707, Ser-746, Leu-748, Glu-752, Gly-777, Val-778, His-779, Ser-780, Gln-820, and Glu-832 each contribute to the ATP site. Residues Gln-820, Glu-832, and Asn-834 each contribute to the Mg(2+) site. 3 residues coordinate Mn(2+): Gln-820, Glu-832, and Asn-834. The region spanning 930-1060 is the MGS-like domain; the sequence is LHLPSYGAVL…ESRAFTTEAI (131 aa). An allosteric domain region spans residues 930 to 1060; the sequence is LHLPSYGAVL…ESRAFTTEAI (131 aa).

This sequence belongs to the CarB family. As to quaternary structure, composed of two chains; the small (or glutamine) chain promotes the hydrolysis of glutamine to ammonia, which is used by the large (or ammonia) chain to synthesize carbamoyl phosphate. Tetramer of heterodimers (alpha,beta)4. Mg(2+) serves as cofactor. Requires Mn(2+) as cofactor.

The enzyme catalyses hydrogencarbonate + L-glutamine + 2 ATP + H2O = carbamoyl phosphate + L-glutamate + 2 ADP + phosphate + 2 H(+). It carries out the reaction hydrogencarbonate + NH4(+) + 2 ATP = carbamoyl phosphate + 2 ADP + phosphate + 2 H(+). The protein operates within amino-acid biosynthesis; L-arginine biosynthesis; carbamoyl phosphate from bicarbonate: step 1/1. Its pathway is pyrimidine metabolism; UMP biosynthesis via de novo pathway; (S)-dihydroorotate from bicarbonate: step 1/3. Its function is as follows. Large subunit of the glutamine-dependent carbamoyl phosphate synthetase (CPSase). CPSase catalyzes the formation of carbamoyl phosphate from the ammonia moiety of glutamine, carbonate, and phosphate donated by ATP, constituting the first step of 2 biosynthetic pathways, one leading to arginine and/or urea and the other to pyrimidine nucleotides. The large subunit (synthetase) binds the substrates ammonia (free or transferred from glutamine from the small subunit), hydrogencarbonate and ATP and carries out an ATP-coupled ligase reaction, activating hydrogencarbonate by forming carboxy phosphate which reacts with ammonia to form carbamoyl phosphate. This is Carbamoyl phosphate synthase large chain from Enterococcus faecalis (strain ATCC 700802 / V583).